A 410-amino-acid polypeptide reads, in one-letter code: Lysosome-associated membrane glycoprotein 2 (410 aa).

The N-terminal stretch at 1–28 (MVCFRLFPVPGSGLVLVCLVLGAVRSYA) is a signal peptide. The tract at residues 29 to 192 (LELNLTDSEN…STNEFLCDKD (164 aa)) is first lumenal domain. At 29 to 375 (LELNLTDSEN…QDCSADDDNF (347 aa)) the chain is on the lumenal side. 2 N-linked (GlcNAc...) (polylactosaminoglycan) asparagine glycosylation sites follow: asparagine 32 and asparagine 38. Cysteine 41 and cysteine 79 are joined by a disulfide. 6 N-linked (GlcNAc...) asparagine glycosylation sites follow: asparagine 49, asparagine 58, asparagine 75, asparagine 101, asparagine 123, and asparagine 179. The cysteines at positions 153 and 189 are disulfide-linked. Residues 193–228 (KTSTVAPTIHTTVPSPTTTPTPKEKPEAGTYSVNNG) are hinge. An O-linked (GalNAc...) serine glycan is attached at serine 195. O-linked (GalNAc...) threonine glycans are attached at residues threonine 196, threonine 200, threonine 203, and threonine 204. A compositionally biased stretch (low complexity) spans 199-213 (PTIHTTVPSPTTTPT). Residues 199–221 (PTIHTTVPSPTTTPTPKEKPEAG) form a disordered region. Serine 207 is a glycosylation site (O-linked (GalNAc...) serine; partial). O-linked (GalNAc...) threonine; partial glycosylation is present at threonine 209. O-linked (GalNAc...) threonine glycans are attached at residues threonine 210 and threonine 211. An O-linked (GalNAc...) threonine; partial glycan is attached at threonine 213. N-linked (GlcNAc...) asparagine glycosylation is found at asparagine 229, asparagine 242, asparagine 257, asparagine 275, and asparagine 300. A second lumenal domain region spans residues 229–375 (NDTCLLATMG…QDCSADDDNF (147 aa)). An intrachain disulfide couples cysteine 232 to cysteine 265. An N-linked (GlcNAc...) (polylactosaminoglycan) asparagine glycan is attached at asparagine 307. Residues asparagine 317 and asparagine 356 are each glycosylated (N-linked (GlcNAc...) asparagine). A disulfide bond links cysteine 331 and cysteine 368. A helical membrane pass occupies residues 376–399 (LVPIAVGAALAGVLILVLLAYFIG). Over 400–410 (LKHHHAGYEQF) the chain is Cytoplasmic. Residues 401–404 (KHHH) are important for binding and subsequent lysosomal degradation of target proteins.

This sequence belongs to the LAMP family. As to quaternary structure, monomer. Homodimer. Homotrimer. Forms large homooligomers. Interacts (via its cytoplasmic region) with HSPA8; HSPA8 mediates recruitment of proteins with a KFERQ motif to the surface of the lysosome for chaperone-mediated autophagy. Interacts with HSP90 in the lysosome lumen; this enhances LAMP2 stability. Interacts with MLLT11. Interacts with ABCB9. Interacts with FURIN. Interacts with CT55; this interaction may be important for LAMP2 protein stability. Interacts with TMEM175; inhibiting the proton channel activity of TMEM175. Forms a ternary complex with RAB7A and RUFY4 (via RUN domain); the interaction with RAB7A is mediated by RUFY4 (via RUN and coiled coil domains). In terms of assembly, (Microbial infection) Interacts with mumps virus protein F; this interaction promotes protein F cleavage by FURIN. Post-translationally, O- and N-glycosylated; some of the 16 N-linked glycans are polylactosaminoglycans. Isoform LAMP-2A is highly expressed in placenta, lung and liver, less in kidney and pancreas, low in brain and skeletal muscle. Isoform LAMP-2B is detected in spleen, thymus, prostate, testis, small intestine, colon, skeletal muscle, brain, placenta, lung, kidney, ovary and pancreas and liver. Isoform LAMP-2C is detected in small intestine, colon, heart, brain, skeletal muscle, and at lower levels in kidney and placenta.

The protein resides in the lysosome membrane. Its subcellular location is the endosome membrane. It localises to the cell membrane. It is found in the cytoplasmic vesicle. The protein localises to the autophagosome membrane. Functionally, lysosomal membrane glycoprotein which plays an important role in lysosome biogenesis, lysosomal pH regulation and autophagy. Acts as an important regulator of lysosomal lumen pH regulation by acting as a direct inhibitor of the proton channel TMEM175, facilitating lysosomal acidification for optimal hydrolase activity. Plays an important role in chaperone-mediated autophagy, a process that mediates lysosomal degradation of proteins in response to various stresses and as part of the normal turnover of proteins with a long biological half-live. Functions by binding target proteins, such as GAPDH, NLRP3 and MLLT11, and targeting them for lysosomal degradation. In the chaperone-mediated autophagy, acts downstream of chaperones, such as HSPA8/HSC70, which recognize and bind substrate proteins and mediate their recruitment to lysosomes, where target proteins bind LAMP2. Plays a role in lysosomal protein degradation in response to starvation. Required for the fusion of autophagosomes with lysosomes during autophagy. Cells that lack LAMP2 express normal levels of VAMP8, but fail to accumulate STX17 on autophagosomes, which is the most likely explanation for the lack of fusion between autophagosomes and lysosomes. Required for normal degradation of the contents of autophagosomes. Required for efficient MHC class II-mediated presentation of exogenous antigens via its function in lysosomal protein degradation; antigenic peptides generated by proteases in the endosomal/lysosomal compartment are captured by nascent MHC II subunits. Is not required for efficient MHC class II-mediated presentation of endogenous antigens. Modulates chaperone-mediated autophagy. Decreases presentation of endogenous antigens by MHCII. Does not play a role in the presentation of exogenous and membrane-derived antigens by MHCII. In terms of biological role, (Microbial infection) Supports the FURIN-mediated cleavage of mumps virus fusion protein F by interacting with both FURIN and the unprocessed form but not the processed form of the viral protein F. The polypeptide is Lysosome-associated membrane glycoprotein 2 (LAMP2) (Homo sapiens (Human)).